A 60-amino-acid polypeptide reads, in one-letter code: Cytotoxin 4 (60 aa).

Cystine bridges form between Cys3-Cys21, Cys14-Cys38, Cys42-Cys53, and Cys54-Cys59.

The protein belongs to the three-finger toxin family. Short-chain subfamily. Type IA cytotoxin sub-subfamily. As to quaternary structure, monomer in solution; Homodimer and oligomer in the presence of negatively charged lipids forming a pore with a size ranging between 20 and 30 Angstroms. Expressed by the venom gland.

Its subcellular location is the secreted. The protein resides in the target cell membrane. Shows cytolytic activity on many different cells by forming pore in lipid membranes. In vivo, increases heart rate or kills the animal by cardiac arrest. In addition, it binds to heparin with high affinity, interacts with Kv channel-interacting protein 1 (KCNIP1) in a calcium-independent manner, and binds to integrin alpha-V/beta-3 (ITGAV/ITGB3) with moderate affinity. The protein is Cytotoxin 4 of Naja mossambica (Mozambique spitting cobra).